Consider the following 242-residue polypeptide: uncharacterized protein (242 aa).

The region spanning 8–76 is the HTH gntR-type domain; that stretch reads TPLYIQLKQI…QGKGTFVKSP (69 aa). Positions 36–55 form a DNA-binding region, H-T-H motif; the sequence is ENELCTKYNVSRITVRKAIL.

This is an uncharacterized protein from Bacillus subtilis (strain 168).